The primary structure comprises 550 residues: Cochlin (550 aa).

The signal sequence occupies residues 1 to 24 (MSAAWIPALGLGVCLLLLPGPAGS). Positions 28-121 (APIAITCFTR…QMLSRWSASF (94 aa)) constitute an LCCL domain. Disulfide bonds link Cys-34–Cys-50 and Cys-54–Cys-74. N-linked (GlcNAc...) asparagine glycosylation occurs at Asn-100. The span at 128–139 (SSTQEATGQAVS) shows a compositional bias: polar residues. The disordered stretch occupies residues 128 to 159 (SSTQEATGQAVSTAHPPTGKRLKKTPEKKTGN). VWFA domains are found at residues 165–346 (DIAF…VKPL) and 367–537 (NIAF…VSDV). Residue Asn-221 is glycosylated (N-linked (GlcNAc...) asparagine).

In terms of assembly, monomer. May form homodimer. Interacts with type II collagen. Interacts with SLC44A2. Interacts with ANXA2. Post-translationally, N-glycosylated. In terms of processing, a 50 kDa form is created by proteolytic cleavage. In terms of tissue distribution, expressed in inner ear structures; the cochlea and the vestibule.

The protein resides in the secreted. It localises to the extracellular space. The protein localises to the extracellular matrix. Its function is as follows. Plays a role in the control of cell shape and motility in the trabecular meshwork. The sequence is that of Cochlin (COCH) from Homo sapiens (Human).